Here is a 572-residue protein sequence, read N- to C-terminus: Phosphoenolpyruvate-protein phosphotransferase (572 aa).

His-190 (tele-phosphohistidine intermediate) is an active-site residue. Positions 297 and 333 each coordinate phosphoenolpyruvate. Residues Glu-427 and Asp-451 each coordinate Mg(2+). Phosphoenolpyruvate-binding positions include 450-451 (ND) and Arg-461. The active-site Proton donor is the Cys-498.

The protein belongs to the PEP-utilizing enzyme family. In terms of assembly, homodimer. Mg(2+) serves as cofactor.

The protein resides in the cytoplasm. It catalyses the reaction L-histidyl-[protein] + phosphoenolpyruvate = N(pros)-phospho-L-histidyl-[protein] + pyruvate. Functionally, general (non sugar-specific) component of the phosphoenolpyruvate-dependent sugar phosphotransferase system (sugar PTS). This major carbohydrate active-transport system catalyzes the phosphorylation of incoming sugar substrates concomitantly with their translocation across the cell membrane. Enzyme I transfers the phosphoryl group from phosphoenolpyruvate (PEP) to the phosphoryl carrier protein (HPr). The protein is Phosphoenolpyruvate-protein phosphotransferase (ptsI) of Mycoplasma pneumoniae (strain ATCC 29342 / M129 / Subtype 1) (Mycoplasmoides pneumoniae).